The following is a 374-amino-acid chain: Protein A6 homolog (374 aa).

Belongs to the chordopoxvirinae A6 family.

The protein resides in the virion. In terms of biological role, plays an essential role in immature virion (IV) to mature virion (MV) transition. In Vertebrata (FPV), this protein is Protein A6 homolog.